The sequence spans 425 residues: Gamma-glutamyl phosphate reductase (425 aa).

It belongs to the gamma-glutamyl phosphate reductase family.

Its subcellular location is the cytoplasm. The catalysed reaction is L-glutamate 5-semialdehyde + phosphate + NADP(+) = L-glutamyl 5-phosphate + NADPH + H(+). The protein operates within amino-acid biosynthesis; L-proline biosynthesis; L-glutamate 5-semialdehyde from L-glutamate: step 2/2. Catalyzes the NADPH-dependent reduction of L-glutamate 5-phosphate into L-glutamate 5-semialdehyde and phosphate. The product spontaneously undergoes cyclization to form 1-pyrroline-5-carboxylate. This chain is Gamma-glutamyl phosphate reductase, found in Symbiobacterium thermophilum (strain DSM 24528 / JCM 14929 / IAM 14863 / T).